Consider the following 571-residue polypeptide: Cytoplasmic polyadenylation element-binding protein 2 (571 aa).

2 disordered regions span residues 1-23 (MSKS…NGDR) and 51-75 (FKQN…VSQE). Basic and acidic residues predominate over residues 61–75 (SESRHENEENKVSQE). Positions 435 to 517 (LVAFIGGVPR…KRVEIKPYFF (83 aa)) constitute an RRM domain.

Functionally, cytoplasmic polyadenylation element binding protein that binds to and regulates the translation of specific mRNAs. The protein is Cytoplasmic polyadenylation element-binding protein 2 (cpb-2) of Caenorhabditis remanei (Caenorhabditis vulgaris).